Reading from the N-terminus, the 421-residue chain is Structure-specific endonuclease subunit SLX1 (421 aa).

Residues 13-95 (AFYCCYLLRS…QHTKESRHAE (83 aa)) form the GIY-YIG domain. Disordered regions lie at residues 34-57 (TPEPSRRLAQHNGDRTGGARKTSS) and 96-120 (VERCESEQLGTRGSSRTGKEVKRAG). The segment at 225–280 (CGVCKQRLNPRNDMIAICSHSLCRCASHLLCLSAHFLEAAGFIGKLIPKEGTCPAC) adopts an SLX1-type zinc-finger fold. The segment covering 310–322 (RRRTEQVGKRKIS) has biased composition (basic residues). The interval 310-339 (RRRTEQVGKRKISNHVSSEKGESEASMPST) is disordered.

The protein belongs to the SLX1 family. Forms a heterodimer with SLX4. Requires a divalent metal cation as cofactor.

The protein resides in the nucleus. In terms of biological role, catalytic subunit of the SLX1-SLX4 structure-specific endonuclease that resolves DNA secondary structures generated during DNA repair and recombination. Has endonuclease activity towards branched DNA substrates, introducing single-strand cuts in duplex DNA close to junctions with ss-DNA. The polypeptide is Structure-specific endonuclease subunit SLX1 (Ajellomyces capsulatus (strain G186AR / H82 / ATCC MYA-2454 / RMSCC 2432) (Darling's disease fungus)).